A 115-amino-acid chain; its full sequence is UPF0122 protein NT01CX_2214 (115 aa).

Belongs to the UPF0122 family.

In terms of biological role, might take part in the signal recognition particle (SRP) pathway. This is inferred from the conservation of its genetic proximity to ftsY/ffh. May be a regulatory protein. The protein is UPF0122 protein NT01CX_2214 of Clostridium novyi (strain NT).